The primary structure comprises 402 residues: Speedy protein E2 (402 aa).

Positions 1-89 are disordered; the sequence is MDRTETRFRK…EEPEKELAPE (89 aa). Residues 16-39 are compositionally biased toward polar residues; it reads GKITTSRQPHPQNEQSPQRSTSGY. Over residues 76–89 the composition is skewed to acidic residues; it reads DESEEEPEKELAPE.

The protein belongs to the Speedy/Ringo family.

The chain is Speedy protein E2 (SPDYE2) from Homo sapiens (Human).